Here is a 152-residue protein sequence, read N- to C-terminus: Adenosine 5'-monophosphoramidase HNT1 (152 aa).

Positions isoleucine 8–leucine 119 constitute an HIT domain. AMP-binding positions include aspartate 33–isoleucine 34, asparagine 93, histidine 99–valine 101, and histidine 106–histidine 108. Positions histidine 104 to histidine 108 match the Histidine triad motif motif. The active-site Tele-AMP-histidine intermediate is histidine 106.

Belongs to the HINT family. In terms of assembly, homodimer. The cofactor is Mg(2+).

The catalysed reaction is adenosine 5'-phosphoramidate + H2O = AMP + NH4(+). In terms of biological role, hydrolyzes adenosine 5'-monophosphoramidate substrates such as AMP-morpholidate, AMP-N-alanine methyl ester, AMP-alpha-acetyl lysine methyl ester and AMP-NH2. The sequence is that of Adenosine 5'-monophosphoramidase HNT1 from Candida albicans (strain SC5314 / ATCC MYA-2876) (Yeast).